The primary structure comprises 215 residues: MATTPYNYSYIFKYIIIGDMGVGKSCLLHQFTEKKFMADCPHTIGVEFGTRIIEVSGQKIKLQIWDTAGQERFRAVTRSYYRGAAGALMVYDITRRSTYNHLSSWLTDARNLTNPNTVIILIGNKADLEAQRDVTYEEAKQFAEENGLLFLEASAKTGENVEDAFLEAAKKIYQNIQDGSLDLNAAESGVQHKPSAPQGGRLTSEPQPQREGCGC.

At alanine 2 the chain carries N-acetylalanine. GTP-binding residues include glycine 21, valine 22, glycine 23, lysine 24, serine 25, cysteine 26, alanine 38, aspartate 39, cysteine 40, histidine 42, and threonine 43. Serine 25 serves as a coordination point for Mg(2+). Positions 42 to 47 match the Switch 1 motif; it reads HTIGVE. Positions 43 and 66 each coordinate Mg(2+). The Switch 2 motif lies at 68–77; that stretch reads AGQERFRAVT. Residues glycine 69, asparagine 124, lysine 125, aspartate 127, alanine 155, and lysine 156 each contribute to the GTP site. Residues 188-215 are disordered; sequence SGVQHKPSAPQGGRLTSEPQPQREGCGC. S-geranylgeranyl cysteine attachment occurs at residues cysteine 213 and cysteine 215. Cysteine 215 is subject to Cysteine methyl ester.

Belongs to the small GTPase superfamily. Rab family. As to quaternary structure, interacts with ZFYVE20. Interacts with KIF16B. Interacts (GTP-bound form) with RUFY1; the interaction recruits RUFY1 onto endosomal membranes. Interacts (GTP-bound form) with RAB11FIP1 (via its C-terminus); the interactions doesn't mediate RAB11FIP1 rectruitment to membranes. Interacts with RAB11FIP2. The cofactor is Mg(2+).

The protein resides in the recycling endosome. The protein localises to the early endosome membrane. It localises to the golgi apparatus membrane. Its subcellular location is the golgi apparatus. It is found in the trans-Golgi network membrane. The protein resides in the cytoplasmic vesicle. The protein localises to the phagosome. It carries out the reaction GTP + H2O = GDP + phosphate + H(+). Its activity is regulated as follows. Regulated by guanine nucleotide exchange factors (GEFs) including DENND6A and DENND6B which promote the exchange of bound GDP for free GTP. Regulated by GTPase activating proteins (GAPs) which increase the GTP hydrolysis activity. Inhibited by GDP dissociation inhibitors (GDIs) which prevent Rab-GDP dissociation. Functionally, the small GTPases Rab are key regulators of intracellular membrane trafficking, from the formation of transport vesicles to their fusion with membranes. Rabs cycle between an inactive GDP-bound form and an active GTP-bound form that is able to recruit to membranes different set of downstream effectors directly responsible for vesicle formation, movement, tethering and fusion. Involved in membrane trafficking between the Golgi complex and endosomes during early embryonic development. Regulates the Golgi to endosome transport of FGFR-containing vesicles during early development, a key process for developing basement membrane and epiblast and primitive endoderm lineages during early postimplantation development. May act by modulating the kinesin KIF16B-cargo association to endosomes. Regulates, together with its guanine nucleotide exchange factor DENND6A, the specific endocytic transport of ADAM10, N-cadherin/CDH2 shedding and cell-cell adhesion. Mediates endosomal tethering and fusion through the interaction with RUFY1 and RAB4B. Interaction with RAB11FIP1 may function in the process of neurite formation. This Sus scrofa (Pig) protein is Ras-related protein Rab-14 (RAB14).